A 184-amino-acid chain; its full sequence is UPF0301 protein SPO0296 (184 aa).

This sequence belongs to the UPF0301 (AlgH) family.

The protein is UPF0301 protein SPO0296 of Ruegeria pomeroyi (strain ATCC 700808 / DSM 15171 / DSS-3) (Silicibacter pomeroyi).